A 287-amino-acid polypeptide reads, in one-letter code: Carbon monoxide dehydrogenase medium chain (287 aa).

The FAD-binding PCMH-type domain occupies 1–177; it reads MIPPRFEYHA…VEIRVPAFAQ (177 aa). FAD-binding positions include 32–36 and 111–115; these read AGGHS and TIGGD.

In terms of assembly, dimer of heterotrimers. Each heterotrimer consists of a large, a medium and a small subunit. FAD is required as a cofactor.

It carries out the reaction CO + a quinone + H2O = a quinol + CO2. Catalyzes the oxidation of carbon monoxide to carbon dioxide. The polypeptide is Carbon monoxide dehydrogenase medium chain (cutM) (Hydrogenophaga pseudoflava (Pseudomonas carboxydoflava)).